The chain runs to 523 residues: 2-isopropylmalate synthase (523 aa).

Residues Val5 to Trp267 enclose the Pyruvate carboxyltransferase domain. Asp14, His202, His204, and Asn238 together coordinate Mn(2+). Residues Arg392–Val523 form a regulatory domain region.

The protein belongs to the alpha-IPM synthase/homocitrate synthase family. LeuA type 1 subfamily. In terms of assembly, homodimer. Mn(2+) serves as cofactor.

The protein resides in the cytoplasm. The enzyme catalyses 3-methyl-2-oxobutanoate + acetyl-CoA + H2O = (2S)-2-isopropylmalate + CoA + H(+). It functions in the pathway amino-acid biosynthesis; L-leucine biosynthesis; L-leucine from 3-methyl-2-oxobutanoate: step 1/4. Functionally, catalyzes the condensation of the acetyl group of acetyl-CoA with 3-methyl-2-oxobutanoate (2-ketoisovalerate) to form 3-carboxy-3-hydroxy-4-methylpentanoate (2-isopropylmalate). This chain is 2-isopropylmalate synthase, found in Escherichia coli (strain SMS-3-5 / SECEC).